Here is a 164-residue protein sequence, read N- to C-terminus: Transcriptional regulator MraZ (164 aa).

SpoVT-AbrB domains are found at residues Thr7–Ala57 and Ala86–Ala129. A disordered region spans residues Arg133–Glu164. Over residues Arg142–Glu164 the composition is skewed to low complexity.

This sequence belongs to the MraZ family. In terms of assembly, forms oligomers.

It is found in the cytoplasm. It localises to the nucleoid. The chain is Transcriptional regulator MraZ from Gluconobacter oxydans (strain 621H) (Gluconobacter suboxydans).